The following is a 185-amino-acid chain: Photosystem I assembly protein Ycf4 (185 aa).

The next 2 membrane-spanning stretches (helical) occupy residues 21 to 43 (NFFWACILFLGSLGFLSVGISSY) and 63 to 85 (GVVMSFYGIAGLFISSYLWCTIL).

The protein belongs to the Ycf4 family.

It localises to the plastid. The protein localises to the chloroplast thylakoid membrane. Functionally, seems to be required for the assembly of the photosystem I complex. The sequence is that of Photosystem I assembly protein Ycf4 from Aegilops crassa (Persian goatgrass).